Consider the following 325-residue polypeptide: RNA ligase 1 (325 aa).

Mg(2+) serves as cofactor. The cofactor is Mn(2+). AMPylates itself (auto-AMPylation).

The enzyme catalyses ATP + (ribonucleotide)n-3'-hydroxyl + 5'-phospho-(ribonucleotide)m = (ribonucleotide)n+m + AMP + diphosphate.. Its function is as follows. Functions as an RNA ligase, in vitro. The ligation reaction entails three nucleotidyl transfer steps. In the first step, the RNA ligase reacts with ATP in the absence of nucleic acid to form a covalent ligase-AMP intermediate and release pyrophosphate. In step 2, the ligase-AMP binds to the nucleic acid and transfers the adenylate to the 5'-PO4 terminus to form an adenylylated intermediate. In step 3, the RNA ligase directs the attack of the 3'-OH on the 5'-phosphoanhydride linkage, resulting in a repaired 3'-5' phosphodiester and release of AMP. Exhibits selectivity for single-stranded RNA substrates and may not have nick-sealing activity on double-stranded DNA-RNA hybrids. May play a role in maintaining RNA integrity under stress conditions, for example in response to reactive oxygen species (ROS). The sequence is that of RNA ligase 1 from Rattus norvegicus (Rat).